Reading from the N-terminus, the 335-residue chain is Biotin synthase (335 aa).

A Radical SAM core domain is found at 46–274; that stretch reads YNIQLASLFS…KSKIRLSAGR (229 aa). The [4Fe-4S] cluster site is built by Cys-61, Cys-65, and Cys-68. [2Fe-2S] cluster-binding residues include Cys-105, Cys-137, Cys-197, and Arg-269.

It belongs to the radical SAM superfamily. Biotin synthase family. In terms of assembly, homodimer. The cofactor is [4Fe-4S] cluster. [2Fe-2S] cluster is required as a cofactor.

The enzyme catalyses (4R,5S)-dethiobiotin + (sulfur carrier)-SH + 2 reduced [2Fe-2S]-[ferredoxin] + 2 S-adenosyl-L-methionine = (sulfur carrier)-H + biotin + 2 5'-deoxyadenosine + 2 L-methionine + 2 oxidized [2Fe-2S]-[ferredoxin]. Its pathway is cofactor biosynthesis; biotin biosynthesis; biotin from 7,8-diaminononanoate: step 2/2. Functionally, catalyzes the conversion of dethiobiotin (DTB) to biotin by the insertion of a sulfur atom into dethiobiotin via a radical-based mechanism. The polypeptide is Biotin synthase (Prochlorococcus marinus (strain AS9601)).